Reading from the N-terminus, the 215-residue chain is L-fuculose phosphate aldolase (215 aa).

Substrate-binding positions include 28 to 29 (GN), 43 to 44 (TG), and 71 to 72 (SS). The active-site Proton donor/acceptor is the E73. 4 residues coordinate Zn(2+): E73, H92, H94, and H155.

The protein belongs to the aldolase class II family. AraD/FucA subfamily. Homotetramer. Zn(2+) serves as cofactor.

It carries out the reaction L-fuculose 1-phosphate = (S)-lactaldehyde + dihydroxyacetone phosphate. It functions in the pathway carbohydrate degradation; L-fucose degradation; L-lactaldehyde and glycerone phosphate from L-fucose: step 3/3. Inhibited by phosphoglycolohydroxamate (PGH). In terms of biological role, involved in the degradation of L-fucose and D-arabinose. Catalyzes the reversible cleavage of L-fuculose 1-phosphate (Fuc1P) to yield dihydroxyacetone phosphate (DHAP) and L-lactaldehyde. Also able to catalyze the reversible cleavage of D-ribulose 1-phosphate, but FucA has a higher affinity for L-fuculose 1-phosphate and L-lactaldehyde than for D-ribulose 1-phosphate and glycolaldehyde, respectively. FucA possesses a high specificity for the dihydroxyacetone phosphate (DHAP), but accepts a great variety of different aldehydes and has a strong preference for L-configurated alpha-hydroxy aldehydes. FucA generates a vicinal diol unit having the absolute (3R,4R)-cis configuration (D-erythro). In Escherichia coli (strain K12), this protein is L-fuculose phosphate aldolase.